Consider the following 312-residue polypeptide: Pantothenate kinase (312 aa).

97–104 lines the ATP pocket; sequence GSVAVGKS.

The protein belongs to the prokaryotic pantothenate kinase family.

It is found in the cytoplasm. The enzyme catalyses (R)-pantothenate + ATP = (R)-4'-phosphopantothenate + ADP + H(+). The protein operates within cofactor biosynthesis; coenzyme A biosynthesis; CoA from (R)-pantothenate: step 1/5. This is Pantothenate kinase from Corynebacterium glutamicum (strain ATCC 13032 / DSM 20300 / JCM 1318 / BCRC 11384 / CCUG 27702 / LMG 3730 / NBRC 12168 / NCIMB 10025 / NRRL B-2784 / 534).